The sequence spans 290 residues: MPNIKEIVSRINSVHSTQQITKAMKMVAAAKLTKAQHQLLQLRPYAGGLSDILNHVIYSTEAELTKHYTQKRTIQRLMLVVISSDKGLCGSFNANIIKNTEAYINQFKDLLPTQIDILVIGKKALNFFQKKDYNLITTYTDLAGQLQFEDISEVASFIMDAFLNYTYDRVELIYNLFGSAASQFVQLEPFLPIVHPASPSHNNHVDYIYEPSKASLVETLIPMTLKIQLYKALLESAASEHGARMTTMSKATDNAEELLKSLRITYNKTRQAAITNEILEIAAGAEALSQ.

The protein belongs to the ATPase gamma chain family. As to quaternary structure, F-type ATPases have 2 components, CF(1) - the catalytic core - and CF(0) - the membrane proton channel. CF(1) has five subunits: alpha(3), beta(3), gamma(1), delta(1), epsilon(1). CF(0) has three main subunits: a, b and c.

The protein localises to the cell inner membrane. Its function is as follows. Produces ATP from ADP in the presence of a proton gradient across the membrane. The gamma chain is believed to be important in regulating ATPase activity and the flow of protons through the CF(0) complex. The sequence is that of ATP synthase gamma chain from Amoebophilus asiaticus (strain 5a2).